The following is a 559-amino-acid chain: Probable inorganic carbon transporter subunit DabB1 (559 aa).

A run of 13 helical transmembrane segments spans residues 4-24, 33-53, 76-96, 106-126, 173-193, 202-222, 240-260, 273-293, 310-330, 375-395, 408-428, 440-460, and 487-507; these read LQWLIPLLPLLSALLVQLFAA, LSVALGTLTVIVAAYQLVAYI, LSSIMSLVVAGISLIVHVYSI, PRFFLLLDLMTASILLMVAAG, LVLAAVLLYQTYGAIDFPTLF, ATIMGLPTAITAAFLVALSAF, GPTPVSALMHAGIVNAGGFII, VLHMLFVVGLITALVGSVLML, MGFMVMECGLGAFSLAVFHLI, LPWLFIGLATLVVPLFILVIA, GAIVLLFFGWITGVQVLFATH, MMILLSFTLIVVGYTFIGHAF, and GLVFLLALIVVAGWFSSYLAS.

This sequence belongs to the inorganic carbon transporter (TC 9.A.2) DabB family. As to quaternary structure, forms a complex with DabA1.

Its subcellular location is the cell inner membrane. In terms of biological role, part of an energy-coupled inorganic carbon pump. The polypeptide is Probable inorganic carbon transporter subunit DabB1 (Halothiobacillus neapolitanus (strain ATCC 23641 / c2) (Thiobacillus neapolitanus)).